The chain runs to 108 residues: uncharacterized protein (108 aa).

This is an uncharacterized protein from Acanthamoeba polyphaga mimivirus (APMV).